A 205-amino-acid chain; its full sequence is MEVQLQELVDKIKKDGVAAADEKAAEIIRAAEEKAKNIIEKAEAEAQESVKKAEAEALRFQKAAESSIDQAGRNTLISFRQGLLNELNAIIKAETAKNYDSAVLKNLIPEAVKGWVKTGNTENLSVILADKDLKELESSLSAALKDHIAKGMELKADSKIAGGFRIGTKDGSAYYDFSAEAVADLFSSYLSPKTAEILKNAAKEL.

Belongs to the V-ATPase E subunit family.

In terms of biological role, produces ATP from ADP in the presence of a proton gradient across the membrane. This Treponema denticola (strain ATCC 35405 / DSM 14222 / CIP 103919 / JCM 8153 / KCTC 15104) protein is V-type ATP synthase subunit E.